The chain runs to 683 residues: Methionine--tRNA ligase (683 aa).

Residues 15-25 (PYANGPIHLGH) carry the 'HIGH' region motif. Zn(2+)-binding residues include cysteine 146, cysteine 149, cysteine 159, and cysteine 162. The 'KMSKS' region motif lies at 332–336 (KMSKS). Lysine 335 is a binding site for ATP. The tRNA-binding domain maps to 581 to 683 (DFCKVDLRVA…AGAKAGQRVK (103 aa)).

This sequence belongs to the class-I aminoacyl-tRNA synthetase family. MetG type 1 subfamily. In terms of assembly, homodimer. Requires Zn(2+) as cofactor.

Its subcellular location is the cytoplasm. It carries out the reaction tRNA(Met) + L-methionine + ATP = L-methionyl-tRNA(Met) + AMP + diphosphate. In terms of biological role, is required not only for elongation of protein synthesis but also for the initiation of all mRNA translation through initiator tRNA(fMet) aminoacylation. The protein is Methionine--tRNA ligase of Histophilus somni (strain 2336) (Haemophilus somnus).